Reading from the N-terminus, the 221-residue chain is Endonuclease V (221 aa).

Mg(2+) is bound by residues D44 and D112.

The protein belongs to the endonuclease V family. The cofactor is Mg(2+).

The protein resides in the cytoplasm. The catalysed reaction is Endonucleolytic cleavage at apurinic or apyrimidinic sites to products with a 5'-phosphate.. Functionally, DNA repair enzyme involved in the repair of deaminated bases. Selectively cleaves double-stranded DNA at the second phosphodiester bond 3' to a deoxyinosine leaving behind the intact lesion on the nicked DNA. In Nostoc punctiforme (strain ATCC 29133 / PCC 73102), this protein is Endonuclease V.